The primary structure comprises 256 residues: Hemolymph lipopolysaccharide-binding protein (256 aa).

The first 21 residues, 1–21 (MMNTRALLPLSVLLMATLCLC), serve as a signal peptide directing secretion. Positions 22-33 (ELPIPILQRFVR) are excised as a propeptide. Asparagine 56 is a glycosylation site (N-linked (GlcNAc...) asparagine). The region spanning 146-256 (IICQQEGGHL…KLPFVCEVEL (111 aa)) is the C-type lectin domain. 2 cysteine pairs are disulfide-bonded: cysteine 148/cysteine 252 and cysteine 230/cysteine 244.

Hemolymph.

It is found in the secreted. In terms of biological role, participates probably in the elimination of foreign substances invading the insect abdominal cavity, and in trapping intracellular symbionts, when they leak from the mycetomes into the hemolymph. In Periplaneta americana (American cockroach), this protein is Hemolymph lipopolysaccharide-binding protein.